The chain runs to 122 residues: Acidic phospholipase A2 BlatPLA2 (122 aa).

Cystine bridges form between Cys26–Cys115, Cys28–Cys44, Cys43–Cys95, Cys49–Cys122, Cys50–Cys88, Cys57–Cys81, and Cys75–Cys86. The Ca(2+) site is built by Tyr27, Gly29, and Gly31. His47 is an active-site residue. Asp48 contacts Ca(2+). Residue Asp89 is part of the active site.

The protein belongs to the phospholipase A2 family. Group II subfamily. D49 sub-subfamily. As to quaternary structure, monomer. It depends on Ca(2+) as a cofactor. As to expression, expressed by the venom gland.

The protein localises to the secreted. It carries out the reaction a 1,2-diacyl-sn-glycero-3-phosphocholine + H2O = a 1-acyl-sn-glycero-3-phosphocholine + a fatty acid + H(+). Acidic phospholipase A2 (PLA2) that only causes a mild edema, when subcutaneously injected in the mice foot. PLA2 catalyzes the calcium-dependent hydrolysis of the 2-acyl groups in 3-sn-phosphoglycerides. This is Acidic phospholipase A2 BlatPLA2 from Bothriechis lateralis (Side-striped palm pitviper).